The following is a 2174-amino-acid chain: Mediator of RNA polymerase II transcription subunit 13 (2174 aa).

A Phosphoserine modification is found at S395. Residues 435-477 are disordered; that stretch reads RNAGQQGQAPSLGQQQQILPKHKTNEKQEKSEKPQKRPLTPFH. Positions 438 to 451 are enriched in low complexity; it reads GQQGQAPSLGQQQQ. The span at 457–469 shows a compositional bias: basic and acidic residues; that stretch reads KTNEKQEKSEKPQ. Residues S500, S504, S530, and S537 each carry the phosphoserine modification. Positions 709–730 are enriched in basic and acidic residues; it reads FPDKKDRQNSEREAGKKHKVED. 3 disordered regions span residues 709 to 735, 749 to 769, and 787 to 816; these read FPDK…TSSV, SPSI…PSTS, and FNSD…ESKT. Residues 805 to 815 are compositionally biased toward basic and acidic residues; that stretch reads SDDKASCKESK. A phosphoserine mark is found at S826 and S890. The segment at 959–1054 is disordered; the sequence is FIKEGDGSNM…ASTPSTCRPL (96 aa). A compositionally biased stretch (low complexity) spans 992–1003; sequence PPSNSGAGILPS. The span at 1004 to 1015 shows a compositional bias: pro residues; the sequence is PSTPRFPTPRTP. S1029 is modified (phosphoserine). The span at 1040–1053 shows a compositional bias: polar residues; the sequence is DLYSPASTPSTCRP. Short sequence motifs (LXXLL motif) lie at residues 1188–1192 and 1279–1283; these read LILLL and LRMLL. 2 stretches are compositionally biased toward polar residues: residues 1484–1498 and 1563–1606; these read SQSL…NTGN and SMNS…SLPT. Disordered regions lie at residues 1484–1505, 1557–1617, and 2015–2048; these read SQSL…PSAT, SFPP…ESTM, and LPAS…RLLS.

The protein belongs to the Mediator complex subunit 13 family. Component of the Mediator complex, which is composed of MED1, MED4, MED6, MED7, MED8, MED9, MED10, MED11, MED12, MED13, MED13L, MED14, MED15, MED16, MED17, MED18, MED19, MED20, MED21, MED22, MED23, MED24, MED25, MED26, MED27, MED29, MED30, MED31, CCNC, CDK8 and CDC2L6/CDK11. The MED12, MED13, CCNC and CDK8 subunits form a distinct module termed the CDK8 module. Mediator containing the CDK8 module is less active than Mediator lacking this module in supporting transcriptional activation. Individual preparations of the Mediator complex lacking one or more distinct subunits have been variously termed ARC, CRSP, DRIP, PC2, SMCC and TRAP. Ubiquitous.

It localises to the nucleus. Component of the Mediator complex, a coactivator involved in the regulated transcription of nearly all RNA polymerase II-dependent genes. Mediator functions as a bridge to convey information from gene-specific regulatory proteins to the basal RNA polymerase II transcription machinery. Mediator is recruited to promoters by direct interactions with regulatory proteins and serves as a scaffold for the assembly of a functional preinitiation complex with RNA polymerase II and the general transcription factors. This is Mediator of RNA polymerase II transcription subunit 13 from Homo sapiens (Human).